Reading from the N-terminus, the 363-residue chain is GTPase Obg (363 aa).

One can recognise an Obg domain in the interval methionine 1–leucine 159. Residues alanine 160–glutamine 341 form the OBG-type G domain. GTP is bound by residues glycine 166–serine 173, phenylalanine 191–histidine 195, aspartate 213–glycine 216, asparagine 291–aspartate 294, and serine 322–leucine 324. Mg(2+)-binding residues include serine 173 and threonine 193. The segment at glycine 343–alanine 363 is disordered.

Belongs to the TRAFAC class OBG-HflX-like GTPase superfamily. OBG GTPase family. Monomer. It depends on Mg(2+) as a cofactor.

The protein resides in the cytoplasm. In terms of biological role, an essential GTPase which binds GTP, GDP and possibly (p)ppGpp with moderate affinity, with high nucleotide exchange rates and a fairly low GTP hydrolysis rate. Plays a role in control of the cell cycle, stress response, ribosome biogenesis and in those bacteria that undergo differentiation, in morphogenesis control. This is GTPase Obg from Verminephrobacter eiseniae (strain EF01-2).